The chain runs to 274 residues: 2,3,4,5-tetrahydropyridine-2,6-dicarboxylate N-succinyltransferase (274 aa).

The substrate site is built by Arg104 and Asp141.

Belongs to the transferase hexapeptide repeat family. Homotrimer.

The protein localises to the cytoplasm. The enzyme catalyses (S)-2,3,4,5-tetrahydrodipicolinate + succinyl-CoA + H2O = (S)-2-succinylamino-6-oxoheptanedioate + CoA. Its pathway is amino-acid biosynthesis; L-lysine biosynthesis via DAP pathway; LL-2,6-diaminopimelate from (S)-tetrahydrodipicolinate (succinylase route): step 1/3. This Shigella boydii serotype 4 (strain Sb227) protein is 2,3,4,5-tetrahydropyridine-2,6-dicarboxylate N-succinyltransferase.